Consider the following 757-residue polypeptide: MKVFCEVLEELYKKVLLGATLENDSHDYIFYLNPAVSDQDCSTATSLEWANTCGIQGRHQPISVGVAPIAVAPVCLKTNSQMSGSREVMLLQLTVIKVMTTRILSVKTEFHAKEQYRDVIKILLESAKVDSKLICMFQNSDKLLSHMAAQCLALLLYFQLREKITLSNSWIAFCQKNLSEYSESNKAIYCLWTLTAIIKEIFKDSCSQKTEILKQFLTHFDTIFEVFYNSLFSQHFENCRDTSKIVNILMCFLDLLELLIASRIHLKLHFTCQRILFLKPSCMLEVITWPIQAFVKRKVIIFLKKCLLCKVGEDLCRGSVPALMPPDHHVAVDMLALANAVLQAVNSGLLKTLSVYEKHSFFGGDEVQPECELITSPDHVILRAASLVIMKSLEIKFQNYSSASEVKVDLQRFMSELLTFLKPHLQPSLQLHNPCKWLSRVFIEQDDDMLEAAKASLGIYLTLTRGCEATESLTQGKEMWDHHTHENGYNPHCIFLFFLKNIGFDSTVLLDFLISSETCFLEYFVRYLKLLQKDWDNFFTICNNFDATESKYDISICGCVPSLVQDQSSNQTIPHRLTAPHSHRDVCARHSWASDAPSEPLKAVMSKGAHTMCASSLSSPRASQSLVDYDSSDDSDVESTEQCLANSKQTSLHQQATKEIQDAAGTSRDKKEFSLEPPSRPLVLKEFDTAFSFDCEVAPNDVVSEVGIFYRIVKCFQELQDAICRLQKKNLFPYNPTALLKLLKYIEVISNKTMNTL.

The residue at position 635 (Ser-635) is a Phosphoserine.

It belongs to the protein lines family. Expressed in adult testis, prostate, prostate, spleen, thymus, skeletal muscle, fetal kidney and brain.

The protein is Protein Lines homolog 1 of Homo sapiens (Human).